The sequence spans 371 residues: Zinc finger CCCH domain-containing protein 21 (371 aa).

The interval 1–64 is disordered; that stretch reads MPPKQQPKAD…AAKKKKEEEK (64 aa). Residues 10-23 are compositionally biased toward basic and acidic residues; it reads DLAKKQKQVEDKTF. Residues 34 to 46 are compositionally biased toward polar residues; that stretch reads VQKYVQSLKQSVQ. 2 C3H1-type zinc fingers span residues 88–115 and 159–197; these read DPKS…HDLN and KPTD…HALP. Coiled coils occupy residues 205–237 and 283–317; these read QMKA…ATQM and FVDD…GTSK. The interval 290–371 is disordered; it reads CEEYEREREQ…IREPNDEGSS (82 aa). A compositionally biased stretch (basic and acidic residues) spans 292–312; sequence EYEREREQEETEQKAKNKEAE. Positions 330–352 are enriched in acidic residues; the sequence is NEEEEDDDDDDDDLDMDELDELE.

The sequence is that of Zinc finger CCCH domain-containing protein 21 from Arabidopsis thaliana (Mouse-ear cress).